The primary structure comprises 389 residues: Phosphoribosylformylglycinamidine cyclo-ligase, chloroplastic (389 aa).

A chloroplast-targeting transit peptide spans 1 to 58 (MEARILQSSSSCYSSLYAVNRSRFSSVSSPKPFSVSFAQTTRTRTRVLSMSKKDGRTD). Positions 46–65 (RVLSMSKKDGRTDKDDDTDS) are disordered.

This sequence belongs to the AIR synthase family.

The protein localises to the plastid. It is found in the chloroplast. It carries out the reaction 2-formamido-N(1)-(5-O-phospho-beta-D-ribosyl)acetamidine + ATP = 5-amino-1-(5-phospho-beta-D-ribosyl)imidazole + ADP + phosphate + H(+). The protein operates within purine metabolism; IMP biosynthesis via de novo pathway; 5-amino-1-(5-phospho-D-ribosyl)imidazole from N(2)-formyl-N(1)-(5-phospho-D-ribosyl)glycinamide: step 2/2. This is Phosphoribosylformylglycinamidine cyclo-ligase, chloroplastic (PUR5) from Arabidopsis thaliana (Mouse-ear cress).